The sequence spans 302 residues: NAD kinase 2 (302 aa).

Aspartate 79 serves as the catalytic Proton acceptor. NAD(+) contacts are provided by residues 79–80 (DG), 153–154 (NE), aspartate 183, 194–199 (TAYSLS), alanine 218, and asparagine 252.

Belongs to the NAD kinase family. The cofactor is a divalent metal cation.

Its subcellular location is the cytoplasm. The enzyme catalyses NAD(+) + ATP = ADP + NADP(+) + H(+). In terms of biological role, involved in the regulation of the intracellular balance of NAD and NADP, and is a key enzyme in the biosynthesis of NADP. Catalyzes specifically the phosphorylation on 2'-hydroxyl of the adenosine moiety of NAD to yield NADP. The chain is NAD kinase 2 from Prochlorococcus marinus subsp. pastoris (strain CCMP1986 / NIES-2087 / MED4).